The sequence spans 337 residues: Probable cytosolic iron-sulfur protein assembly protein Ciao1 (337 aa).

WD repeat units follow at residues 12–51 (GHRG…RWVA), 58–97 (GHSR…FECN), 102–141 (GHEN…EYEC), 147–186 (THTQ…SDWS), 193–232 (SHES…NEFG), 251–290 (YHSR…SPHE), and 301–337 (AHSQ…EPEE).

The protein belongs to the WD repeat CIA1 family.

Its function is as follows. Essential component of the cytosolic iron-sulfur (Fe/S) protein assembly machinery. Required for the maturation of extramitochondrial Fe/S proteins. The polypeptide is Probable cytosolic iron-sulfur protein assembly protein Ciao1 (Aedes aegypti (Yellowfever mosquito)).